A 358-amino-acid polypeptide reads, in one-letter code: Fructose-bisphosphate aldolase (358 aa).

A D-glyceraldehyde 3-phosphate-binding site is contributed by S62. D109 serves as the catalytic Proton donor. Zn(2+) is bound by residues H110, D144, E174, and H226. G227 is a binding site for dihydroxyacetone phosphate. H264 contacts Zn(2+). Residues 265–267 (GGS) and 286–289 (NIDT) each bind dihydroxyacetone phosphate.

The protein belongs to the class II fructose-bisphosphate aldolase family. It depends on Zn(2+) as a cofactor.

The catalysed reaction is beta-D-fructose 1,6-bisphosphate = D-glyceraldehyde 3-phosphate + dihydroxyacetone phosphate. It functions in the pathway carbohydrate degradation; glycolysis; D-glyceraldehyde 3-phosphate and glycerone phosphate from D-glucose: step 4/4. Functionally, catalyzes the aldol condensation of dihydroxyacetone phosphate (DHAP or glycerone-phosphate) with glyceraldehyde 3-phosphate (G3P) to form fructose 1,6-bisphosphate (FBP) in gluconeogenesis and the reverse reaction in glycolysis. In Edwardsiella ictaluri (strain 93-146), this protein is Fructose-bisphosphate aldolase (fba).